The sequence spans 181 residues: Large ribosomal subunit protein uL5 (181 aa).

It belongs to the universal ribosomal protein uL5 family. Part of the 50S ribosomal subunit; part of the 5S rRNA/L5/L18/L25 subcomplex. Contacts the 5S rRNA and the P site tRNA. Forms a bridge to the 30S subunit in the 70S ribosome.

This is one of the proteins that bind and probably mediate the attachment of the 5S RNA into the large ribosomal subunit, where it forms part of the central protuberance. In the 70S ribosome it contacts protein S13 of the 30S subunit (bridge B1b), connecting the 2 subunits; this bridge is implicated in subunit movement. Contacts the P site tRNA; the 5S rRNA and some of its associated proteins might help stabilize positioning of ribosome-bound tRNAs. The chain is Large ribosomal subunit protein uL5 from Desulforamulus reducens (strain ATCC BAA-1160 / DSM 100696 / MI-1) (Desulfotomaculum reducens).